Reading from the N-terminus, the 456-residue chain is tRNA-2-methylthio-N(6)-dimethylallyladenosine synthase (456 aa).

The 119-residue stretch at 17 to 135 (KLYLIQSFGC…LPRMIHQVQE (119 aa)) folds into the MTTase N-terminal domain. Residues Cys-26, Cys-62, Cys-96, Cys-172, Cys-176, and Cys-179 each coordinate [4Fe-4S] cluster. In terms of domain architecture, Radical SAM core spans 158-387 (RKDKLKAWVT…IELQNLISLE (230 aa)). Residues 390–453 (QREEGRVLEV…PNLLEGEVVP (64 aa)) enclose the TRAM domain.

The protein belongs to the methylthiotransferase family. MiaB subfamily. Monomer. It depends on [4Fe-4S] cluster as a cofactor.

The protein resides in the cytoplasm. The enzyme catalyses N(6)-dimethylallyladenosine(37) in tRNA + (sulfur carrier)-SH + AH2 + 2 S-adenosyl-L-methionine = 2-methylsulfanyl-N(6)-dimethylallyladenosine(37) in tRNA + (sulfur carrier)-H + 5'-deoxyadenosine + L-methionine + A + S-adenosyl-L-homocysteine + 2 H(+). Its function is as follows. Catalyzes the methylthiolation of N6-(dimethylallyl)adenosine (i(6)A), leading to the formation of 2-methylthio-N6-(dimethylallyl)adenosine (ms(2)i(6)A) at position 37 in tRNAs that read codons beginning with uridine. This chain is tRNA-2-methylthio-N(6)-dimethylallyladenosine synthase, found in Desulforamulus reducens (strain ATCC BAA-1160 / DSM 100696 / MI-1) (Desulfotomaculum reducens).